The sequence spans 78 residues: MSRVCQVTGKRPMVGNNRSHAKNSTRRRFLPNLQNHRFWLENEKRFVQLRISTKGMRIIDKKGIEVVIAELRARGEKV.

The segment at 1–23 is disordered; it reads MSRVCQVTGKRPMVGNNRSHAKN.

This sequence belongs to the bacterial ribosomal protein bL28 family.

The chain is Large ribosomal subunit protein bL28 from Shewanella pealeana (strain ATCC 700345 / ANG-SQ1).